Reading from the N-terminus, the 142-residue chain is Large ribosomal subunit protein uL11 (142 aa).

Belongs to the universal ribosomal protein uL11 family. As to quaternary structure, part of the ribosomal stalk of the 50S ribosomal subunit. Interacts with L10 and the large rRNA to form the base of the stalk. L10 forms an elongated spine to which L12 dimers bind in a sequential fashion forming a multimeric L10(L12)X complex. One or more lysine residues are methylated.

Functionally, forms part of the ribosomal stalk which helps the ribosome interact with GTP-bound translation factors. The protein is Large ribosomal subunit protein uL11 of Mycolicibacterium gilvum (strain PYR-GCK) (Mycobacterium gilvum (strain PYR-GCK)).